The following is a 496-amino-acid chain: FAD-linked oxidoreductase AFUA_1G00980 (496 aa).

An N-terminal signal peptide occupies residues 1 to 21; it reads MRRATLIPLAIWVAGAAAAAA. Residues N49, N122, N205, N258, N344, N351, N371, and N382 are each glycosylated (N-linked (GlcNAc...) asparagine). The FAD-binding PCMH-type domain occupies 64–243; the sequence is MAPTYAVSVR…VEAVYQVTDL (180 aa).

This sequence belongs to the oxygen-dependent FAD-linked oxidoreductase family. The cofactor is FAD.

Its function is as follows. FAD-linked oxidoreductase; part of the gene cluster that mediates the biosynthesis of fumigermin that inhibits germination of spores of the inducing S.rapamycinicus, and thus helps the fungus to defend resources in the shared habitat against a bacterial competitor. The partially reducing polyketide synthase fngA alone is sufficient for the production of fumigermin. FgnA catalyzes the condensation of 3 malonyl-CoA units to an acetyl-CoA starter, and 3 methylations to yield fumigermin. It is remarkable that the five cluster genes including fgnA are conserved in distantly related fungi, supporting the assumption of a fumigermin cluster; it is thus possible that originally all five genes were functional, but that the genes encoding tailoring enzymes became inactive from mutations, similar to the case of the fgnA gene in strains A1163 and Af293. This chain is FAD-linked oxidoreductase AFUA_1G00980, found in Aspergillus fumigatus (strain ATCC MYA-4609 / CBS 101355 / FGSC A1100 / Af293) (Neosartorya fumigata).